Consider the following 619-residue polypeptide: Pentatricopeptide repeat-containing protein At3g22470, mitochondrial (619 aa).

A mitochondrion-targeting transit peptide spans 1–28 (MIQRLIPLNRKASNFTQILEKGTSLLHY). PPR repeat units follow at residues 69–103 (TPID…GIEH), 104–138 (DMYT…GYEP), 139–173 (DTIT…KQRP), 174–208 (DLVT…GFQP), 209–243 (DEVT…NIKA), 244–278 (SVVQ…GIKA), 279–313 (DVVT…NIIP), 314–348 (DVVT…GIAP), 349–383 (DTIT…GCEP), 384–418 (DIVT…GLIP), 419–453 (NTIT…GVPP), 454–488 (SVVT…RMTL), 489–523 (GIGI…GVKP), 524–558 (DVVT…GCTP), and 559–593 (DDFT…GFSA).

It belongs to the PPR family. P subfamily.

The protein localises to the mitochondrion. The protein is Pentatricopeptide repeat-containing protein At3g22470, mitochondrial of Arabidopsis thaliana (Mouse-ear cress).